A 306-amino-acid polypeptide reads, in one-letter code: Putative secretory carrier-associated membrane protein 1 (306 aa).

Residues 1-60 (MAGRYDSNPFEEDDVNPFSEQARGKAGGQPSYGGGAFYMPNPRNVPSMSSNSRLSPLPPE) are disordered. The Cytoplasmic portion of the chain corresponds to 1–141 (MAGRYDSNPF…EIPSHLQRMQ (141 aa)). Residues 25 to 36 (KAGGQPSYGGGA) are compositionally biased toward gly residues. The segment covering 44-54 (NVPSMSSNSRL) has biased composition (polar residues). A coiled-coil region spans residues 72–109 (LDSSKDLKNREKELQAREAELNKREKELKRREEAAARA). 4 consecutive transmembrane segments (helical) span residues 142-162 (YVAFASFLGLACCLFWNVIAV), 174-194 (IWLLAIIYFISGVPGAYVLWY), 209-229 (FGLFFLVYLFHILFCVFSAVA), and 257-277 (IFYFVGFGLFCVESLLSIWVI). At 278-306 (QQVYMYFRGSGKAAEMKRDATRGAMRAAF) the chain is on the cytoplasmic side.

Belongs to the SCAMP family.

The protein localises to the cell membrane. Its subcellular location is the cytoplasmic vesicle. It localises to the secretory vesicle membrane. In terms of biological role, probably involved in membrane trafficking. This is Putative secretory carrier-associated membrane protein 1 (SCAMP1) from Oryza sativa subsp. indica (Rice).